Here is a 112-residue protein sequence, read N- to C-terminus: DNA-binding protein TSIB_0525 (112 aa).

This sequence belongs to the PDCD5 family.

The chain is DNA-binding protein TSIB_0525 from Thermococcus sibiricus (strain DSM 12597 / MM 739).